We begin with the raw amino-acid sequence, 131 residues long: Profilin-2 (131 aa).

The protein belongs to the profilin family. In terms of assembly, occurs in many kinds of cells as a complex with monomeric actin in a 1:1 ratio.

The protein resides in the cytoplasm. The protein localises to the cytoskeleton. In terms of biological role, binds to actin and affects the structure of the cytoskeleton. At high concentrations, profilin prevents the polymerization of actin, whereas it enhances it at low concentrations. By binding to PIP2, it inhibits the formation of IP3 and DG. This is Profilin-2 from Lilium longiflorum (Trumpet lily).